Consider the following 160-residue polypeptide: MTKIRIGNGYDIHQLVSDRVLILGGIQIPHELGLLGHSDADVLTHAIMDAMLGALSLGDIGHYFPPSDPKWAGADSLVLLNQVHQLIRDRGWQVGNIDSVVVAERPKLKPHIHNMRDKLAAILELESNQIGIKATTNEKLGPVGREEGICAYAVVLLLKE.

Residues Asp11 and His13 each coordinate a divalent metal cation. Residues 11-13 and 37-38 each bind 4-CDP-2-C-methyl-D-erythritol 2-phosphate; these read DIH and HS. His45 serves as a coordination point for a divalent metal cation. Residues 59-61, 135-138, and Arg145 each bind 4-CDP-2-C-methyl-D-erythritol 2-phosphate; these read DIG and TTNE.

The protein belongs to the IspF family. In terms of assembly, homotrimer. It depends on a divalent metal cation as a cofactor.

The enzyme catalyses 4-CDP-2-C-methyl-D-erythritol 2-phosphate = 2-C-methyl-D-erythritol 2,4-cyclic diphosphate + CMP. Its pathway is isoprenoid biosynthesis; isopentenyl diphosphate biosynthesis via DXP pathway; isopentenyl diphosphate from 1-deoxy-D-xylulose 5-phosphate: step 4/6. Its function is as follows. Involved in the biosynthesis of isopentenyl diphosphate (IPP) and dimethylallyl diphosphate (DMAPP), two major building blocks of isoprenoid compounds. Catalyzes the conversion of 4-diphosphocytidyl-2-C-methyl-D-erythritol 2-phosphate (CDP-ME2P) to 2-C-methyl-D-erythritol 2,4-cyclodiphosphate (ME-CPP) with a corresponding release of cytidine 5-monophosphate (CMP). This chain is 2-C-methyl-D-erythritol 2,4-cyclodiphosphate synthase, found in Nostoc punctiforme (strain ATCC 29133 / PCC 73102).